Reading from the N-terminus, the 381-residue chain is Prokineticin receptor 2 (381 aa).

Residues methionine 1–isoleucine 51 are Extracellular-facing. 2 N-linked (GlcNAc...) asparagine glycosylation sites follow: asparagine 7 and asparagine 24. A helical transmembrane segment spans residues valine 52–isoleucine 72. The Cytoplasmic portion of the chain corresponds to alanine 73–asparagine 86. Residues leucine 87–glutamate 107 traverse the membrane as a helical segment. The Extracellular portion of the chain corresponds to methionine 108–threonine 133. Cysteine 125 and cysteine 205 are oxidised to a cystine. The helical transmembrane segment at valine 134–isoleucine 154 threads the bilayer. Topologically, residues valine 155–serine 168 are cytoplasmic. A helical membrane pass occupies residues phenylalanine 169–threonine 189. Topologically, residues threonine 190 to tyrosine 220 are extracellular. A helical membrane pass occupies residues phenylalanine 221–alanine 241. At arginine 242–threonine 270 the chain is on the cytoplasmic side. A helical membrane pass occupies residues valine 271–phenylalanine 291. The Extracellular segment spans residues threonine 292–threonine 310. Residues alanine 311–valine 331 form a helical membrane-spanning segment. The Cytoplasmic portion of the chain corresponds to threonine 332–lysine 381.

The protein belongs to the G-protein coupled receptor 1 family. As to quaternary structure, homodimer. As to expression, expressed in several regions of the brain, including paraventricular hypothalamic nucleus, dorsal medial hypothalamic nucleus, paratenial thalamic nuclei, paracentral thalamic nucleus, lateral habenular nucleus, lateral septal nucleus, lateral globus pallidus and amygdala. Highest expression seen in paraventricular thalamic nuclei and is also extensively expressed in the suprachiasmatic nucleus.

It is found in the cell membrane. Functionally, receptor for prokineticin 2. Exclusively coupled to the G(q) subclass of heteromeric G proteins. Activation leads to mobilization of calcium, stimulation of phosphoinositide turnover and activation of p44/p42 mitogen-activated protein kinase. The chain is Prokineticin receptor 2 (Prokr2) from Mus musculus (Mouse).